Here is a 528-residue protein sequence, read N- to C-terminus: GMP synthase [glutamine-hydrolyzing] (528 aa).

The region spanning 13 to 204 is the Glutamine amidotransferase type-1 domain; the sequence is AIVILDFGSQ…VNHICGCEQD (192 aa). Cysteine 90 acts as the Nucleophile in catalysis. Active-site residues include histidine 178 and glutamate 180. The region spanning 205–403 is the GMPS ATP-PPase domain; that stretch reads WTTNAFIDEA…LGLPEEIVRR (199 aa). 232–238 is a binding site for ATP; sequence SGGVDSS.

As to quaternary structure, homodimer.

The catalysed reaction is XMP + L-glutamine + ATP + H2O = GMP + L-glutamate + AMP + diphosphate + 2 H(+). The protein operates within purine metabolism; GMP biosynthesis; GMP from XMP (L-Gln route): step 1/1. Catalyzes the synthesis of GMP from XMP. The sequence is that of GMP synthase [glutamine-hydrolyzing] from Synechococcus sp. (strain CC9902).